We begin with the raw amino-acid sequence, 670 residues long: MGYESNRSFNKATGAGFIIAMGIVYGDIGTSPLYTMESIVQGQGGLERISETSIIGALSLIIWTLTLITTVKYVWIALKADNNHEGGIFSLFTLVRKYAKWLIIPAMIGGAALLSDGALTPAVTVTSAIEGLRSIPAFHEAFGQQQLPIVIITLAILAVLFLIQRFGTSIVGKVFGPVMFIWFSFLGITGLINLFGDFSVLQAINPYWAIHLLLSPENKAGIFVLGSVFLATTGAEALYSDLGHVGRGNIHVSWPFVKVCIILSYCGQGAWLLQNRGKSLGDINPFFAVLPQNLIIFSVILATLAAIIASQALISGSFTLVSEAIRLKLLPRLRIFYPGETFGQLYIPAVNLGLWLAASFIVVYFQSSAHMEAAYGLAITVTMLMTTTLLTVYLSHYQKVKKVLVGLFFTVFIFIEGLFFAASAVKFMHGGYVVVIIAAMILFVMAIWHKSDQLFYKYLNSSNLNDYKEQMDKLRKDETYDLYHTNVVYLTAKMDKEWIDRSILYSILDKRPKKAKVYWFVKVNVTDEPYTSEYEVDMLGTDFIVCVNLYLGFHMRQEIPRYLRTIVTNLMESGRLPQQNQTYSITPGRKVGDFRFIILEEKLINARQMPGFERFVLQTKEQIKKITASPARWFGLHFSEVTVETVPLVLSDVKNLEIHERISEENQGES.

The next 13 membrane-spanning stretches (helical) occupy residues 14–34, 58–78, 101–121, 147–167, 175–195, 196–216, 220–240, 252–272, 294–314, 345–365, 374–394, 403–423, and 427–447; these read GAGFIIAMGIVYGDIGTSPLY, LSLIIWTLTLITTVKYVWIAL, WLIIPAMIGGAALLSDGALTP, LPIVIITLAILAVLFLIQRFG, FGPVMFIWFSFLGITGLINLF, GDFSVLQAINPYWAIHLLLSP, AGIFVLGSVFLATTGAEALYS, VSWPFVKVCIILSYCGQGAWL, LIIFSVILATLAAIIASQALI, LYIPAVNLGLWLAASFIVVYF, AYGLAITVTMLMTTTLLTVYL, VLVGLFFTVFIFIEGLFFAAS, and FMHGGYVVVIIAAMILFVMAI.

It belongs to the HAK/KUP transporter (TC 2.A.72) family.

It localises to the cell membrane. The enzyme catalyses K(+)(in) + H(+)(in) = K(+)(out) + H(+)(out). Transport of potassium into the cell. Likely operates as a K(+):H(+) symporter. This is Probable potassium transport system protein Kup 1 from Lactococcus lactis subsp. lactis (strain IL1403) (Streptococcus lactis).